A 422-amino-acid polypeptide reads, in one-letter code: Interleukin-11 receptor subunit alpha (422 aa).

An N-terminal signal peptide occupies residues 1–22 (MSSSCSGLSRVLVAVATALVSA). Residues 24 to 370 (SPCPQAWGPP…DSVEQVAVLV (347 aa)) are Extracellular-facing. The Ig-like C2-type domain occupies 27–110 (PQAWGPPGVQ…LGGTVTLQLG (84 aa)). 3 disulfide bridges follow: cysteine 48-cysteine 94, cysteine 120-cysteine 130, and cysteine 170-cysteine 180. Fibronectin type-III domains are found at residues 112 to 219 (PPAR…LRPD) and 220 to 317 (PPQG…TPST). The N-linked (GlcNAc...) asparagine glycan is linked to asparagine 127. Asparagine 194 carries N-linked (GlcNAc...) asparagine glycosylation. A WSXWS motif motif is present at residues 304 to 308 (WSTWS). The segment at 335-355 (EVEPQVDSPAPPRPSLQPHPR) is disordered. The chain crosses the membrane as a helical span at residues 371-391 (SLGILSFLGLVAGALALGLWL). Residues 392 to 422 (RLRRGGKDGSPKPGFLASVIPVDRHPGAPNL) are Cytoplasmic-facing.

Belongs to the type I cytokine receptor family. Type 3 subfamily. On IL11 binding, forms a multimer complex with IL6ST/gp130. A short soluble form is also released from the membrane by proteolysis. The sIL11RA is formed either by limited proteolysis of membrane-bound receptors, a process referred to as ectodomain shedding, or directly secreted from the cells after alternative mRNA splicing. mIL11RA is cleaved by the proteases ADAM10, ELANE and PRTN3.

It is found in the membrane. The protein resides in the secreted. Its function is as follows. Receptor for interleukin-11 (IL11). The receptor systems for IL6, LIF, OSM, CNTF, IL11 and CT1 can utilize IL6ST for initiating signal transmission. The IL11/IL11RA/IL6ST complex may be involved in the control of proliferation and/or differentiation of skeletogenic progenitor or other mesenchymal cells. Essential for the normal development of craniofacial bones and teeth. Restricts suture fusion and tooth number. Functionally, soluble form of IL11 receptor (sIL11RA) that acts as an agonist of IL11 activity. The IL11:sIL11RA complex binds to IL6ST/gp130 on cell surfaces and induces signaling also on cells that do not express membrane-bound IL11RA in a process called IL11 trans-signaling. The sequence is that of Interleukin-11 receptor subunit alpha (IL11RA) from Pongo abelii (Sumatran orangutan).